A 144-amino-acid chain; its full sequence is Bacilliredoxin BT9727_3899 (144 aa).

This sequence belongs to the bacilliredoxin family.

This Bacillus thuringiensis subsp. konkukian (strain 97-27) protein is Bacilliredoxin BT9727_3899.